The sequence spans 186 residues: Putative glutathione-dependent formaldehyde-activating enzyme (186 aa).

The region spanning 20 to 166 (FSGGKLRCKC…FKSIGLETYD (147 aa)) is the CENP-V/GFA domain. Zn(2+) is bound by residues Cys27, Cys29, Cys48, Cys50, Cys53, Cys95, and Cys98.

It belongs to the Gfa family. Requires Zn(2+) as cofactor.

The catalysed reaction is S-(hydroxymethyl)glutathione = glutathione + formaldehyde. It functions in the pathway one-carbon metabolism; formaldehyde degradation; formate from formaldehyde (glutathione route): step 1/3. Catalyzes the condensation of formaldehyde and glutathione to S-hydroxymethylglutathione. The sequence is that of Putative glutathione-dependent formaldehyde-activating enzyme from Fusarium vanettenii (strain ATCC MYA-4622 / CBS 123669 / FGSC 9596 / NRRL 45880 / 77-13-4) (Fusarium solani subsp. pisi).